A 547-amino-acid polypeptide reads, in one-letter code: Chaperonin GroEL (547 aa).

ATP is bound by residues 30–33 (TLGP), Lys-51, 87–91 (DGTTT), Gly-415, 479–481 (NAA), and Asp-495.

It belongs to the chaperonin (HSP60) family. Forms a cylinder of 14 subunits composed of two heptameric rings stacked back-to-back. Interacts with the co-chaperonin GroES.

It localises to the cytoplasm. It carries out the reaction ATP + H2O + a folded polypeptide = ADP + phosphate + an unfolded polypeptide.. In terms of biological role, together with its co-chaperonin GroES, plays an essential role in assisting protein folding. The GroEL-GroES system forms a nano-cage that allows encapsulation of the non-native substrate proteins and provides a physical environment optimized to promote and accelerate protein folding. The sequence is that of Chaperonin GroEL from Cupriavidus necator (strain ATCC 17699 / DSM 428 / KCTC 22496 / NCIMB 10442 / H16 / Stanier 337) (Ralstonia eutropha).